Here is a 118-residue protein sequence, read N- to C-terminus: Transmembrane protein 243 (118 aa).

The residue at position 1 (Met1) is an N-acetylmethionine. Helical transmembrane passes span 32–52, 62–82, and 94–114; these read LVVGSLTSLLILVTLISAFVF, IFFAVCISLSSITACILIYWY, and LIYYIIFSIIMLCICANLYFH.

This sequence belongs to the TMEM243 family. Widely expressed.

The protein localises to the membrane. The sequence is that of Transmembrane protein 243 (TMEM243) from Homo sapiens (Human).